An 89-amino-acid chain; its full sequence is Small ribosomal subunit protein uS15 (89 aa).

The protein belongs to the universal ribosomal protein uS15 family. Part of the 30S ribosomal subunit. Forms a bridge to the 50S subunit in the 70S ribosome, contacting the 23S rRNA.

In terms of biological role, one of the primary rRNA binding proteins, it binds directly to 16S rRNA where it helps nucleate assembly of the platform of the 30S subunit by binding and bridging several RNA helices of the 16S rRNA. Functionally, forms an intersubunit bridge (bridge B4) with the 23S rRNA of the 50S subunit in the ribosome. This is Small ribosomal subunit protein uS15 from Bradyrhizobium sp. (strain BTAi1 / ATCC BAA-1182).